A 234-amino-acid polypeptide reads, in one-letter code: UDP-2,3-diacylglucosamine hydrolase (234 aa).

Asp9, His11, Asp42, Asn80, and His115 together coordinate Mn(2+). A substrate-binding site is contributed by 80–81 (NR). The substrate site is built by Asp123, Ser161, Lys165, Lys168, and His196. Mn(2+) contacts are provided by His196 and His198.

The protein belongs to the LpxH family. Mn(2+) is required as a cofactor.

It is found in the cell inner membrane. It catalyses the reaction UDP-2-N,3-O-bis[(3R)-3-hydroxytetradecanoyl]-alpha-D-glucosamine + H2O = 2-N,3-O-bis[(3R)-3-hydroxytetradecanoyl]-alpha-D-glucosaminyl 1-phosphate + UMP + 2 H(+). It functions in the pathway glycolipid biosynthesis; lipid IV(A) biosynthesis; lipid IV(A) from (3R)-3-hydroxytetradecanoyl-[acyl-carrier-protein] and UDP-N-acetyl-alpha-D-glucosamine: step 4/6. In terms of biological role, hydrolyzes the pyrophosphate bond of UDP-2,3-diacylglucosamine to yield 2,3-diacylglucosamine 1-phosphate (lipid X) and UMP by catalyzing the attack of water at the alpha-P atom. Involved in the biosynthesis of lipid A, a phosphorylated glycolipid that anchors the lipopolysaccharide to the outer membrane of the cell. This is UDP-2,3-diacylglucosamine hydrolase from Haemophilus ducreyi (strain 35000HP / ATCC 700724).